We begin with the raw amino-acid sequence, 27 residues long: Cysteine-rich venom protein tropirin (27 aa).

It belongs to the CRISP family. Contains 8 disulfide bonds. Expressed by the venom gland.

It localises to the secreted. Blocks contraction of smooth muscle elicited by high potassium-induced depolarization, but does not block caffeine-stimulated contraction. May target voltage-gated calcium channels on smooth muscle. This chain is Cysteine-rich venom protein tropirin, found in Tropidechis carinatus (Australian rough-scaled snake).